The chain runs to 153 residues: Transcriptional repressor NrdR (153 aa).

A zinc finger lies at 3-34 (CPFCAHDDSQVKDSRPAEDNAAIRRRRQCSKC). The ATP-cone domain occupies 49-139 (VTVVKSDDKR…VYRDFSEARD (91 aa)).

It belongs to the NrdR family. It depends on Zn(2+) as a cofactor.

Functionally, negatively regulates transcription of bacterial ribonucleotide reductase nrd genes and operons by binding to NrdR-boxes. This Erythrobacter litoralis (strain HTCC2594) protein is Transcriptional repressor NrdR.